A 159-amino-acid chain; its full sequence is UPF0756 membrane protein PTH_1668 (159 aa).

A run of 4 helical transmembrane segments spans residues 15 to 37, 61 to 81, 117 to 137, and 138 to 158; these read ILIT…SSCI, LGLV…KLTI, PEII…LRGT, and PCGP…ASLF.

The protein belongs to the UPF0756 family.

The protein localises to the cell membrane. This is UPF0756 membrane protein PTH_1668 from Pelotomaculum thermopropionicum (strain DSM 13744 / JCM 10971 / SI).